The sequence spans 245 residues: Isopentenyl phosphate kinase (245 aa).

An ATP-binding site is contributed by 5-9 (KIGGS). Gly-45 contributes to the substrate binding site. Residue Gly-46 coordinates ATP. 2 residues coordinate substrate: His-50 and Gly-143. ATP is bound by residues Asp-164, 169 to 174 (YSKDPK), Gly-201, and Lys-205.

The protein belongs to the isopentenyl phosphate kinase family. Homodimer.

The catalysed reaction is isopentenyl phosphate + ATP = isopentenyl diphosphate + ADP. Functionally, catalyzes the formation of isopentenyl diphosphate (IPP), the building block of all isoprenoids. Has lower activity with isopentenyl thiolophosphate (ISP). Has low activity with dimethylallyl phosphate (DMAP), 1-butyl phosphate (BP) and 3-buten-1-yl phosphate (BEP). Has no significant activity with geranyl phosphate (in vitro). In Thermoplasma acidophilum (strain ATCC 25905 / DSM 1728 / JCM 9062 / NBRC 15155 / AMRC-C165), this protein is Isopentenyl phosphate kinase.